A 243-amino-acid chain; its full sequence is Ubiquinone/menaquinone biosynthesis C-methyltransferase UbiE (243 aa).

Residues T69, D90, and 116–117 (DA) contribute to the S-adenosyl-L-methionine site.

It belongs to the class I-like SAM-binding methyltransferase superfamily. MenG/UbiE family.

It carries out the reaction a 2-demethylmenaquinol + S-adenosyl-L-methionine = a menaquinol + S-adenosyl-L-homocysteine + H(+). The catalysed reaction is a 2-methoxy-6-(all-trans-polyprenyl)benzene-1,4-diol + S-adenosyl-L-methionine = a 5-methoxy-2-methyl-3-(all-trans-polyprenyl)benzene-1,4-diol + S-adenosyl-L-homocysteine + H(+). Its pathway is quinol/quinone metabolism; menaquinone biosynthesis; menaquinol from 1,4-dihydroxy-2-naphthoate: step 2/2. It functions in the pathway cofactor biosynthesis; ubiquinone biosynthesis. Functionally, methyltransferase required for the conversion of demethylmenaquinol (DMKH2) to menaquinol (MKH2) and the conversion of 2-polyprenyl-6-methoxy-1,4-benzoquinol (DDMQH2) to 2-polyprenyl-3-methyl-6-methoxy-1,4-benzoquinol (DMQH2). The chain is Ubiquinone/menaquinone biosynthesis C-methyltransferase UbiE from Burkholderia ambifaria (strain MC40-6).